The primary structure comprises 541 residues: Atlastin-3 (541 aa).

The disordered stretch occupies residues M1–G22. Residues M1–G25 form an N-terminal hypervariable region (HVR) region. At M1–A445 the chain is on the cytoplasmic side. Residues D57 to K305 enclose the GB1/RHD3-type G domain. Positions 70, 71, 72, 73, 74, 75, and 109 each coordinate GDP. D142 serves as a coordination point for Mg(2+). Positions 213, 214, 272, and 275 each coordinate GDP. The interval M343 to S434 is 3HB (three-helix bundle) domain. K391 carries the N6-acetyllysine modification. A helical transmembrane segment spans residues V446–L466. Residue E467 is a topological domain, lumenal. A helical membrane pass occupies residues V468 to G488. Topologically, residues Y489–Q541 are cytoplasmic.

The protein belongs to the TRAFAC class dynamin-like GTPase superfamily. GB1/RHD3 GTPase family. GB1 subfamily. As to quaternary structure, monomeric and homodimeric. The homodimer, transiently formed by two molecules on opposing membranes, is the active form mediating ER membrane fusion. Interacts with ZFYVE27; both proteins are involved in endoplasmic reticulum tubular network organization. Interacts with REEP5; both proteins are involved in endoplasmic reticulum tubular network organization. As to expression, expressed in cardiomyocytes (at protein level).

It is found in the endoplasmic reticulum membrane. It catalyses the reaction GTP + H2O = GDP + phosphate + H(+). Its function is as follows. Atlastin-3 (ATL3) is a membrane-anchored GTPase that mediates the GTP-dependent fusion of endoplasmic reticulum (ER) membranes, maintaining the continuous ER network. It facilitates the formation of three-way junctions where ER tubules intersect. Two atlastin-3 on neighboring ER tubules bind GTP and form loose homodimers through the GB1/RHD3-type G domains and 3HB regions. Upon GTP hydrolysis, the 3HB regions tighten, pulling the membranes together to drive their fusion. After fusion, the homodimer disassembles upon release of inorganic phosphate (Pi). Subsequently, GDP dissociates, resetting the monomers to a conformation ready for a new fusion cycle. The polypeptide is Atlastin-3 (Mus musculus (Mouse)).